We begin with the raw amino-acid sequence, 201 residues long: tRNA (guanine-N(7)-)-methyltransferase (201 aa).

The S-adenosyl-L-methionine site is built by Glu-33, Glu-58, Asp-85, and Asp-106. Residue Asp-106 is part of the active site. Substrate-binding positions include Lys-110, Asp-142, and 180–183 (TTYE).

Belongs to the class I-like SAM-binding methyltransferase superfamily. TrmB family.

It carries out the reaction guanosine(46) in tRNA + S-adenosyl-L-methionine = N(7)-methylguanosine(46) in tRNA + S-adenosyl-L-homocysteine. The protein operates within tRNA modification; N(7)-methylguanine-tRNA biosynthesis. In terms of biological role, catalyzes the formation of N(7)-methylguanine at position 46 (m7G46) in tRNA. In Mesomycoplasma hyopneumoniae (strain J / ATCC 25934 / NCTC 10110) (Mycoplasma hyopneumoniae), this protein is tRNA (guanine-N(7)-)-methyltransferase.